Consider the following 66-residue polypeptide: KEGYIVNLSTGCKYECYKLGDNDYCLKECKLQYGKGAGGYCYAFGCWCTHLYEQAVVWPLPKKTCN.

Residues 1–66 (KEGYIVNLST…VWPLPKKTCN (66 aa)) form the LCN-type CS-alpha/beta domain. 4 cysteine pairs are disulfide-bonded: Cys12–Cys65, Cys16–Cys41, Cys25–Cys46, and Cys29–Cys48.

As to expression, expressed by the venom gland.

The protein resides in the secreted. Its activity is regulated as follows. Is susceptible to be neutralized by human antibodies scFvs 10FG2 and HV. Functionally, beta toxins bind voltage-independently at site-4 of sodium channels (Nav) and reduces peak current and shifts the voltage of activation toward more negative potentials thereby affecting sodium channel activation and promoting spontaneous and repetitive firing. This toxin is slightly toxic to mice. The protein is Beta-mammal toxin Cv1 of Centruroides villegasi (Scorpion).